We begin with the raw amino-acid sequence, 569 residues long: Rab GTPase-binding effector protein 2 (569 aa).

Disordered stretches follow at residues 1–41 (MAAA…GELS), 180–265 (IQRR…ETAS), and 388–411 (RAEQ…ESLP). An N-acetylalanine modification is found at alanine 2. A coiled-coil region spans residues 34-187 (EAESGELSRL…QEIQRRPRHA (154 aa)). A phosphoserine mark is found at serine 189 and serine 193. Serine 200 is subject to Phosphoserine; by GSK3-alpha. Serine 204 carries the phosphoserine modification. 2 stretches are compositionally biased toward low complexity: residues 245–257 (SSSS…QGLS) and 393–403 (PSSAPQGSQQE). A coiled-coil region spans residues 289–523 (DTQWEQLQTE…LQAELETSEQ (235 aa)).

Belongs to the rabaptin family. In terms of assembly, heterodimer with RABGEF1. The dimer binds RAB5A that has been activated by GTP-binding. Interacts with SDCCAG8; this interaction is important for ciliogenesis regulation. Interacts with RAB4A; this interaction may mediate VEGFR2 cell surface expression.

It is found in the cytoplasm. Its subcellular location is the early endosome. The protein localises to the cytoskeleton. The protein resides in the microtubule organizing center. It localises to the centrosome. It is found in the cilium basal body. Plays a role in membrane trafficking and in homotypic early endosome fusion. Participates in arteriogenesis by regulating vascular endothelial growth factor receptor 2/VEGFR2 cell surface expression and endosomal trafficking. By interacting with SDCCAG8, localizes to centrosomes and plays a critical role in ciliogenesis. The polypeptide is Rab GTPase-binding effector protein 2 (RABEP2) (Homo sapiens (Human)).